The chain runs to 430 residues: S-adenosylmethionine synthase (430 aa).

ATP is bound at residue His-14. A Mg(2+)-binding site is contributed by Asp-16. Residue Glu-42 coordinates K(+). Glu-55 and Gln-98 together coordinate L-methionine. The segment at 98 to 108 (QSADINRGVER) is flexible loop. ATP contacts are provided by residues 164–166 (DAK), 254–255 (KF), Asp-263, 269–270 (RK), Ala-286, and Lys-290. Asp-263 serves as a coordination point for L-methionine. Lys-294 provides a ligand contact to L-methionine.

The protein belongs to the AdoMet synthase family. As to quaternary structure, homotetramer; dimer of dimers. The cofactor is Mg(2+). Requires K(+) as cofactor.

It localises to the cytoplasm. It carries out the reaction L-methionine + ATP + H2O = S-adenosyl-L-methionine + phosphate + diphosphate. Its pathway is amino-acid biosynthesis; S-adenosyl-L-methionine biosynthesis; S-adenosyl-L-methionine from L-methionine: step 1/1. Its function is as follows. Catalyzes the formation of S-adenosylmethionine (AdoMet) from methionine and ATP. The overall synthetic reaction is composed of two sequential steps, AdoMet formation and the subsequent tripolyphosphate hydrolysis which occurs prior to release of AdoMet from the enzyme. The sequence is that of S-adenosylmethionine synthase from Bacteroides fragilis (strain ATCC 25285 / DSM 2151 / CCUG 4856 / JCM 11019 / LMG 10263 / NCTC 9343 / Onslow / VPI 2553 / EN-2).